The sequence spans 192 residues: Imidazole glycerol phosphate synthase subunit HisH (192 aa).

The Glutamine amidotransferase type-1 domain maps to 1 to 192 (MIVIVDYGLG…QAIQGGFIND (192 aa)). C77 (nucleophile) is an active-site residue. Catalysis depends on residues H169 and E171.

In terms of assembly, heterodimer of HisH and HisF.

The protein resides in the cytoplasm. It catalyses the reaction 5-[(5-phospho-1-deoxy-D-ribulos-1-ylimino)methylamino]-1-(5-phospho-beta-D-ribosyl)imidazole-4-carboxamide + L-glutamine = D-erythro-1-(imidazol-4-yl)glycerol 3-phosphate + 5-amino-1-(5-phospho-beta-D-ribosyl)imidazole-4-carboxamide + L-glutamate + H(+). The enzyme catalyses L-glutamine + H2O = L-glutamate + NH4(+). It functions in the pathway amino-acid biosynthesis; L-histidine biosynthesis; L-histidine from 5-phospho-alpha-D-ribose 1-diphosphate: step 5/9. Its function is as follows. IGPS catalyzes the conversion of PRFAR and glutamine to IGP, AICAR and glutamate. The HisH subunit catalyzes the hydrolysis of glutamine to glutamate and ammonia as part of the synthesis of IGP and AICAR. The resulting ammonia molecule is channeled to the active site of HisF. The chain is Imidazole glycerol phosphate synthase subunit HisH from Staphylococcus aureus (strain COL).